A 477-amino-acid polypeptide reads, in one-letter code: Endoglucanase A (477 aa).

A signal peptide spans 1-32 (MKNVKKRVGVVLLILAVLGVYMLAMPANTVSA). Catalysis depends on Glu-95, which acts as the Proton donor. Asp-152 serves as the catalytic Nucleophile. A Dockerin domain is found at 411-477 (PQVVYGDVNG…LIKSIPHLPY (67 aa)).

This sequence belongs to the glycosyl hydrolase 8 (cellulase D) family.

The enzyme catalyses Endohydrolysis of (1-&gt;4)-beta-D-glucosidic linkages in cellulose, lichenin and cereal beta-D-glucans.. This enzyme catalyzes the endohydrolysis of 1,4-beta-glucosidic linkages in cellulose, lichenin and cereal beta-D-glucans. This is Endoglucanase A (celA) from Acetivibrio thermocellus (strain ATCC 27405 / DSM 1237 / JCM 9322 / NBRC 103400 / NCIMB 10682 / NRRL B-4536 / VPI 7372) (Clostridium thermocellum).